The following is a 250-amino-acid chain: Flavin-dependent thymidylate synthase (250 aa).

The ThyX domain occupies 7–233 (LSVELIACSS…PTVFGDFQVE (227 aa)). DUMP is bound by residues 92-95 (ELVR), 103-107 (QLSQR), and R172. FAD is bound by residues 95 to 97 (RHR) and Q103. The ThyX motif motif lies at 95–105 (RHRHFSFSQLS). FAD is bound by residues 188-190 (NFR) and H194. R199 contributes to the dUMP binding site. R199 serves as the catalytic Involved in ionization of N3 of dUMP, leading to its activation.

It belongs to the thymidylate synthase ThyX family. Homotetramer. FAD serves as cofactor.

It carries out the reaction dUMP + (6R)-5,10-methylene-5,6,7,8-tetrahydrofolate + NADPH + H(+) = dTMP + (6S)-5,6,7,8-tetrahydrofolate + NADP(+). It functions in the pathway pyrimidine metabolism; dTTP biosynthesis. Catalyzes the reductive methylation of 2'-deoxyuridine-5'-monophosphate (dUMP) to 2'-deoxythymidine-5'-monophosphate (dTMP) while utilizing 5,10-methylenetetrahydrofolate (mTHF) as the methyl donor, and NADPH and FADH(2) as the reductant. The chain is Flavin-dependent thymidylate synthase from Corynebacterium efficiens (strain DSM 44549 / YS-314 / AJ 12310 / JCM 11189 / NBRC 100395).